The sequence spans 63 residues: Large ribosomal subunit protein uL30 (63 aa).

It belongs to the universal ribosomal protein uL30 family. As to quaternary structure, part of the 50S ribosomal subunit.

In Geobacillus stearothermophilus (Bacillus stearothermophilus), this protein is Large ribosomal subunit protein uL30.